The chain runs to 112 residues: K(+)/H(+) antiporter modulator KhtS (112 aa).

Residues 42–64 (YVPMSSYPQETQSAKTPSPGSMH) are disordered. Over residues 47 to 60 (SYPQETQSAKTPSP) the composition is skewed to polar residues.

Its subcellular location is the cell membrane. In terms of biological role, modulates the activity of the potassium/proton antiporter KhtU. Involved in protection of the cell from methylglyoxal, a toxic by-product of glycolysis. The chain is K(+)/H(+) antiporter modulator KhtS from Bacillus subtilis (strain 168).